The primary structure comprises 168 residues: Peroxynitrite isomerase (168 aa).

The short motif at 25–31 is the GXWXGXG element; it reads GTWRGAG. His160 is a binding site for heme b.

Belongs to the nitrobindin family. Homodimer. Heme b is required as a cofactor.

The catalysed reaction is peroxynitrite = nitrate. It participates in nitrogen metabolism. Heme-binding protein able to scavenge peroxynitrite and to protect free L-tyrosine against peroxynitrite-mediated nitration, by acting as a peroxynitrite isomerase that converts peroxynitrite to nitrate. Therefore, this protein likely plays a role in peroxynitrite sensing and in the detoxification of reactive nitrogen and oxygen species (RNS and ROS, respectively). Is able to bind nitric oxide (NO) in vitro, but may act as a sensor of peroxynitrite levels in vivo. This is Peroxynitrite isomerase from Nocardia farcinica (strain IFM 10152).